The sequence spans 251 residues: Ubiquinone/menaquinone biosynthesis C-methyltransferase UbiE (251 aa).

S-adenosyl-L-methionine contacts are provided by residues T74, D95, 123-124 (NA), and S140.

This sequence belongs to the class I-like SAM-binding methyltransferase superfamily. MenG/UbiE family.

It catalyses the reaction a 2-demethylmenaquinol + S-adenosyl-L-methionine = a menaquinol + S-adenosyl-L-homocysteine + H(+). The enzyme catalyses a 2-methoxy-6-(all-trans-polyprenyl)benzene-1,4-diol + S-adenosyl-L-methionine = a 5-methoxy-2-methyl-3-(all-trans-polyprenyl)benzene-1,4-diol + S-adenosyl-L-homocysteine + H(+). Its pathway is quinol/quinone metabolism; menaquinone biosynthesis; menaquinol from 1,4-dihydroxy-2-naphthoate: step 2/2. The protein operates within cofactor biosynthesis; ubiquinone biosynthesis. Methyltransferase required for the conversion of demethylmenaquinol (DMKH2) to menaquinol (MKH2) and the conversion of 2-polyprenyl-6-methoxy-1,4-benzoquinol (DDMQH2) to 2-polyprenyl-3-methyl-6-methoxy-1,4-benzoquinol (DMQH2). The protein is Ubiquinone/menaquinone biosynthesis C-methyltransferase UbiE of Pectobacterium atrosepticum (strain SCRI 1043 / ATCC BAA-672) (Erwinia carotovora subsp. atroseptica).